The following is a 357-amino-acid chain: Protein Wnt-9b (357 aa).

Positions 1 to 22 are cleaved as a signal peptide; it reads MRPPPALALAGLCLLALPAAAA. 11 disulfide bridges follow: Cys89–Cys100, Cys135–Cys143, Cys145–Cys162, Cys210–Cys224, Cys212–Cys219, Cys291–Cys316, Cys305–Cys311, Cys315–Cys355, Cys331–Cys346, Cys333–Cys343, and Cys338–Cys339. An N-linked (GlcNAc...) asparagine glycan is attached at Asn99. Residue Ser216 is the site of O-palmitoleoyl serine; by PORCN attachment.

Belongs to the Wnt family. In terms of assembly, forms a soluble 1:1 complex with AFM; this prevents oligomerization and is required for prolonged biological activity. The complex with AFM may represent the physiological form in body fluids. Component of the Wnt-Fzd-LRP5-LRP6 signaling complex that contains a WNT protein, a FZD protein and LRP5 or LRP6. Interacts directly in the complex with LRP6. Interacts with PKD1 (via extracellular domain). Post-translationally, palmitoleoylation is required for efficient binding to frizzled receptors. Depalmitoleoylation leads to Wnt signaling pathway inhibition. In terms of tissue distribution, moderately expressed in fetal kidney and adult kidney. Also found in brain.

Its subcellular location is the secreted. It localises to the extracellular space. It is found in the extracellular matrix. Ligand for members of the frizzled family of seven transmembrane receptors. Functions in the canonical Wnt/beta-catenin signaling pathway. Required for normal embryonic kidney development, and for normal development of the urogenital tract, including uterus and part of the oviduct and the upper vagina in females, and epididymis and vas deferens in males. Activates a signaling cascade in the metanephric mesenchyme that induces tubulogenesis. Acts upstream of WNT4 in the signaling pathways that mediate development of kidney tubules and the Muellerian ducts. Plays a role in cranofacial development and is required for normal fusion of the palate during embryonic development. The chain is Protein Wnt-9b (WNT9B) from Homo sapiens (Human).